Consider the following 333-residue polypeptide: tRNA N6-adenosine threonylcarbamoyltransferase (333 aa).

2 residues coordinate Fe cation: H111 and H115. Residues 134-138 (LVSGG), D167, G180, and N272 contribute to the substrate site. D300 serves as a coordination point for Fe cation.

This sequence belongs to the KAE1 / TsaD family. Fe(2+) is required as a cofactor.

The protein localises to the cytoplasm. It catalyses the reaction L-threonylcarbamoyladenylate + adenosine(37) in tRNA = N(6)-L-threonylcarbamoyladenosine(37) in tRNA + AMP + H(+). Its function is as follows. Required for the formation of a threonylcarbamoyl group on adenosine at position 37 (t(6)A37) in tRNAs that read codons beginning with adenine. Is involved in the transfer of the threonylcarbamoyl moiety of threonylcarbamoyl-AMP (TC-AMP) to the N6 group of A37, together with TsaE and TsaB. TsaD likely plays a direct catalytic role in this reaction. The sequence is that of tRNA N6-adenosine threonylcarbamoyltransferase from Hamiltonella defensa subsp. Acyrthosiphon pisum (strain 5AT).